Reading from the N-terminus, the 113-residue chain is Large ribosomal subunit protein uL22 (113 aa).

It belongs to the universal ribosomal protein uL22 family. As to quaternary structure, part of the 50S ribosomal subunit.

Functionally, this protein binds specifically to 23S rRNA; its binding is stimulated by other ribosomal proteins, e.g. L4, L17, and L20. It is important during the early stages of 50S assembly. It makes multiple contacts with different domains of the 23S rRNA in the assembled 50S subunit and ribosome. In terms of biological role, the globular domain of the protein is located near the polypeptide exit tunnel on the outside of the subunit, while an extended beta-hairpin is found that lines the wall of the exit tunnel in the center of the 70S ribosome. The chain is Large ribosomal subunit protein uL22 from Geobacillus thermodenitrificans (strain NG80-2).